The chain runs to 31 residues: Cliotide T11 (31 aa).

The cyclopeptide (Gly-Asn) cross-link spans 1–31 (GIPCGESCVFIPCTITALLGCSCKDKVCYKN). Cystine bridges form between Cys-4–Cys-21, Cys-8–Cys-23, and Cys-13–Cys-28.

Post-translationally, contains 3 disulfide bonds. In terms of processing, this is a cyclic peptide. As to expression, expressed in seed but not in root, nodule, flower, stem, shoot, leaf and pod (at protein level).

Probably participates in a plant defense mechanism. The chain is Cliotide T11 from Clitoria ternatea (Butterfly pea).